The sequence spans 98 residues: NADH-ubiquinone oxidoreductase chain 4L (98 aa).

Helical transmembrane passes span 1–21 (MSIT…GLLM), 29–49 (SLLC…MAIL), and 61–81 (IILL…LVMV).

The protein belongs to the complex I subunit 4L family. As to quaternary structure, core subunit of respiratory chain NADH dehydrogenase (Complex I) which is composed of 45 different subunits.

It is found in the mitochondrion inner membrane. It catalyses the reaction a ubiquinone + NADH + 5 H(+)(in) = a ubiquinol + NAD(+) + 4 H(+)(out). Its function is as follows. Core subunit of the mitochondrial membrane respiratory chain NADH dehydrogenase (Complex I) which catalyzes electron transfer from NADH through the respiratory chain, using ubiquinone as an electron acceptor. Part of the enzyme membrane arm which is embedded in the lipid bilayer and involved in proton translocation. This Mesophylla macconnelli (MacConnell's bat) protein is NADH-ubiquinone oxidoreductase chain 4L (MT-ND4L).